Consider the following 281-residue polypeptide: Undecaprenyl-diphosphatase (281 aa).

Transmembrane regions (helical) follow at residues 1-21, 45-65, 93-113, 125-145, 155-175, 195-215, 227-247, and 256-276; these read MNVL…FLPI, WTAF…IYFA, SKLG…GLVF, LIVI…SEVV, ISWL…VPGA, AARF…LLEF, FLVL…TIAF, and STNV…WMVF.

The protein belongs to the UppP family.

Its subcellular location is the cell inner membrane. The catalysed reaction is di-trans,octa-cis-undecaprenyl diphosphate + H2O = di-trans,octa-cis-undecaprenyl phosphate + phosphate + H(+). Its function is as follows. Catalyzes the dephosphorylation of undecaprenyl diphosphate (UPP). Confers resistance to bacitracin. The protein is Undecaprenyl-diphosphatase of Syntrophobacter fumaroxidans (strain DSM 10017 / MPOB).